The following is a 469-amino-acid chain: Putative dipeptidase MW1694 (469 aa).

Zn(2+) is bound at residue His84. Residue Asp86 is part of the active site. Residue Asp115 participates in Zn(2+) binding. Glu149 (proton acceptor) is an active-site residue. Residues Glu150, Asp173, and His440 each coordinate Zn(2+).

The protein belongs to the peptidase M20A family. The cofactor is Zn(2+).

The sequence is that of Putative dipeptidase MW1694 from Staphylococcus aureus (strain MW2).